Consider the following 267-residue polypeptide: Undecaprenyl-diphosphatase (267 aa).

8 helical membrane-spanning segments follow: residues 1–21 (MSYF…FLPI), 39–59 (QGLA…VIYF), 83–103 (AKLA…GLLM), 111–131 (LRSA…LWWV), 144–164 (TGWK…IPGT), 189–209 (FLMS…KLVT), 218–238 (FLLT…HFFL), and 245–265 (GMTP…AFLL).

This sequence belongs to the UppP family.

The protein localises to the cell inner membrane. It carries out the reaction di-trans,octa-cis-undecaprenyl diphosphate + H2O = di-trans,octa-cis-undecaprenyl phosphate + phosphate + H(+). In terms of biological role, catalyzes the dephosphorylation of undecaprenyl diphosphate (UPP). Confers resistance to bacitracin. The chain is Undecaprenyl-diphosphatase from Vibrio parahaemolyticus serotype O3:K6 (strain RIMD 2210633).